We begin with the raw amino-acid sequence, 642 residues long: MPVITITNGLQLTFQKPVSSLEIAKYISSNCEQNCIASYLNNRLVDAVDLIMQDSKLDIITAEDKAGLDILRCSCNHLLGHAIKQLWPEAKMTIGKIIDKGFYYDIDLEHKLQPEDIDALEKCMHTLANKNYNIVKKYVSWQQAREIFQANGEIYKVAILDDNINQHTLVALYYYEEYVDMCRGPHAPNIRFCHHFKLQKTSITYWRNNDKNKKLQRIYGTAWGTDMQLKCYLQSLQEVKKRDHRKIGQQLDLYHIQEEAPGMVFWHVDGWIIFRELETFIRSKLQTYKYQEVKSPVMIDRTLWEQTGHWSNYAEHIFTTSSENREYCIKPMNCPGHVQIFNQQINSYRDLPLRMAEFGSCYRNEPSGSLHGLMRVRNFTQDDAHIFCTEEQVCDEINNNIKMLYEVYHTFGFKKILVNLSTRPAHRIGNDKIWDKAEQDLATTLTNNGILFKYNVGAGAFYGPKIEFTLLDSFDRAWQCGTIQLDFSLPSRLKAFYINKNNQRLVPVMIHRAILGSLERFIGILIEEYAGFFPTWLAPTQVVLMNISDNQSNYVIQLMQKLSTANIRAKIDLRNEKIGFKIREHTLRRVPYMLICGDQEIKMGKVTIRTRYGKNLGMFEMNNFIEKLQHEINHRNLSQIEK.

In terms of domain architecture, TGS spans 1–61 (MPVITITNGL…MQDSKLDIIT (61 aa)). The segment at 243-534 (DHRKIGQQLD…LIEEYAGFFP (292 aa)) is catalytic. The Zn(2+) site is built by Cys334, His385, and His511.

The protein belongs to the class-II aminoacyl-tRNA synthetase family. In terms of assembly, homodimer. It depends on Zn(2+) as a cofactor.

Its subcellular location is the cytoplasm. It catalyses the reaction tRNA(Thr) + L-threonine + ATP = L-threonyl-tRNA(Thr) + AMP + diphosphate + H(+). Its function is as follows. Catalyzes the attachment of threonine to tRNA(Thr) in a two-step reaction: L-threonine is first activated by ATP to form Thr-AMP and then transferred to the acceptor end of tRNA(Thr). Also edits incorrectly charged L-seryl-tRNA(Thr). The chain is Threonine--tRNA ligase from Baumannia cicadellinicola subsp. Homalodisca coagulata.